A 275-amino-acid chain; its full sequence is Tryptophan synthase alpha chain (275 aa).

Active-site proton acceptor residues include Glu-49 and Asp-60.

This sequence belongs to the TrpA family. In terms of assembly, tetramer of two alpha and two beta chains.

The catalysed reaction is (1S,2R)-1-C-(indol-3-yl)glycerol 3-phosphate + L-serine = D-glyceraldehyde 3-phosphate + L-tryptophan + H2O. The protein operates within amino-acid biosynthesis; L-tryptophan biosynthesis; L-tryptophan from chorismate: step 5/5. The alpha subunit is responsible for the aldol cleavage of indoleglycerol phosphate to indole and glyceraldehyde 3-phosphate. The sequence is that of Tryptophan synthase alpha chain from Psychrobacter sp. (strain PRwf-1).